Reading from the N-terminus, the 131-residue chain is C-glycoside deglycosidase beta subunit (131 aa).

The protein belongs to the C-glycoside deglycosidase beta subunit family. Heterodimer composed of an alpha subunit (CarB1) and a beta subunit (CarC1). Requires Mg(2+) as cofactor.

The enzyme catalyses 3''-dehydroisovitexin = 1,5-anhydro-D-erythro-hex-1-en-3-ulose + apigenin. With respect to regulation, activity is strongly reduced in the presence of chelating agents. Functionally, carbon-carbon bond-cleaving enzyme which participates in the metabolism of C-glycosides. Acts on the C6-glycosylated compound 3''-dehydroisovitexin (3''-oxo-isovitexin). Shows weak activity with 3''-dehydroisoorientin (3''-oxo-homoorientin) and 3'-dehydromangiferin (3'-oxo-mangiferin). The chain is C-glycoside deglycosidase beta subunit from Arthrobacter globiformis (strain ATCC 8010 / DSM 20124 / JCM 1332 / NBRC 12137 / NCIMB 8907 / NRRL B-2979 / 168).